We begin with the raw amino-acid sequence, 241 residues long: Biosynthetic peptidoglycan transglycosylase (241 aa).

Residues 19–39 (AILAVLGVWIAGILLFSVMPV) traverse the membrane as a helical segment.

This sequence belongs to the glycosyltransferase 51 family.

The protein localises to the cell inner membrane. It carries out the reaction [GlcNAc-(1-&gt;4)-Mur2Ac(oyl-L-Ala-gamma-D-Glu-L-Lys-D-Ala-D-Ala)](n)-di-trans,octa-cis-undecaprenyl diphosphate + beta-D-GlcNAc-(1-&gt;4)-Mur2Ac(oyl-L-Ala-gamma-D-Glu-L-Lys-D-Ala-D-Ala)-di-trans,octa-cis-undecaprenyl diphosphate = [GlcNAc-(1-&gt;4)-Mur2Ac(oyl-L-Ala-gamma-D-Glu-L-Lys-D-Ala-D-Ala)](n+1)-di-trans,octa-cis-undecaprenyl diphosphate + di-trans,octa-cis-undecaprenyl diphosphate + H(+). The protein operates within cell wall biogenesis; peptidoglycan biosynthesis. Its function is as follows. Peptidoglycan polymerase that catalyzes glycan chain elongation from lipid-linked precursors. This Cronobacter sakazakii (strain ATCC BAA-894) (Enterobacter sakazakii) protein is Biosynthetic peptidoglycan transglycosylase.